Reading from the N-terminus, the 223-residue chain is 2-C-methyl-D-erythritol 4-phosphate cytidylyltransferase (223 aa).

This sequence belongs to the IspD/TarI cytidylyltransferase family. IspD subfamily.

It catalyses the reaction 2-C-methyl-D-erythritol 4-phosphate + CTP + H(+) = 4-CDP-2-C-methyl-D-erythritol + diphosphate. Its pathway is isoprenoid biosynthesis; isopentenyl diphosphate biosynthesis via DXP pathway; isopentenyl diphosphate from 1-deoxy-D-xylulose 5-phosphate: step 2/6. Its function is as follows. Catalyzes the formation of 4-diphosphocytidyl-2-C-methyl-D-erythritol from CTP and 2-C-methyl-D-erythritol 4-phosphate (MEP). The chain is 2-C-methyl-D-erythritol 4-phosphate cytidylyltransferase from Prochlorococcus marinus (strain AS9601).